Reading from the N-terminus, the 102-residue chain is NADH-quinone oxidoreductase subunit K (102 aa).

A run of 3 helical transmembrane segments spans residues 5–25 (LSHY…GIFL), 31–51 (IVIL…MVAF), and 65–85 (LFIL…LVVF).

The protein belongs to the complex I subunit 4L family. As to quaternary structure, NDH-1 is composed of 14 different subunits. Subunits NuoA, H, J, K, L, M, N constitute the membrane sector of the complex.

It is found in the cell inner membrane. The catalysed reaction is a quinone + NADH + 5 H(+)(in) = a quinol + NAD(+) + 4 H(+)(out). Functionally, NDH-1 shuttles electrons from NADH, via FMN and iron-sulfur (Fe-S) centers, to quinones in the respiratory chain. The immediate electron acceptor for the enzyme in this species is believed to be ubiquinone. Couples the redox reaction to proton translocation (for every two electrons transferred, four hydrogen ions are translocated across the cytoplasmic membrane), and thus conserves the redox energy in a proton gradient. The sequence is that of NADH-quinone oxidoreductase subunit K from Rhizobium johnstonii (strain DSM 114642 / LMG 32736 / 3841) (Rhizobium leguminosarum bv. viciae).